The chain runs to 376 residues: Actin-related protein T1 (376 aa).

The protein belongs to the actin family.

The protein localises to the cytoplasm. It is found in the cytoskeleton. The protein resides in the nucleus. Its subcellular location is the cytoplasmic vesicle. It localises to the secretory vesicle. The protein localises to the acrosome. In terms of biological role, negatively regulates the Hedgehog (SHH) signaling. Binds to the promoter of the SHH signaling mediator, GLI1, and inhibits its expression. This chain is Actin-related protein T1 (Actrt1), found in Rattus norvegicus (Rat).